The chain runs to 288 residues: MQLIVVSGRSGSGKTVALRVLEDLGYYCVDNLPVNLLPQLIVSVESQYDKLAVSIDVRNLPVSADKLETLLAQVRNEGRVEFSSFFFDAENSTLLKRYGESRRLHPLSRKQLSLDEAIREETNLLAPLSSTADLRIDTTSLSIHDLSELIKTRVLGKKENELVLVFESFGFKYGIPKDADFVFDARFLPNPHWIPELKPFTGKDEPVARYLSSQPDVMQFILQIENMLATWLPHLERNNRSYVTVGIGCTGGQHRSVFIAEQLAGAFRLLGKNVQIRHRTLDKSTPQH.

8–15 (GRSGSGKT) contacts ATP. 56–59 (DVRN) is a binding site for GTP.

The protein belongs to the RapZ-like family.

Functionally, displays ATPase and GTPase activities. This chain is Nucleotide-binding protein ASA_0318, found in Aeromonas salmonicida (strain A449).